Consider the following 239-residue polypeptide: tRNA1(Val) (adenine(37)-N6)-methyltransferase (239 aa).

Belongs to the methyltransferase superfamily. tRNA (adenine-N(6)-)-methyltransferase family.

It is found in the cytoplasm. The enzyme catalyses adenosine(37) in tRNA1(Val) + S-adenosyl-L-methionine = N(6)-methyladenosine(37) in tRNA1(Val) + S-adenosyl-L-homocysteine + H(+). Specifically methylates the adenine in position 37 of tRNA(1)(Val) (anticodon cmo5UAC). The sequence is that of tRNA1(Val) (adenine(37)-N6)-methyltransferase from Vibrio vulnificus (strain YJ016).